Here is a 392-residue protein sequence, read N- to C-terminus: ATP phosphoribosyltransferase regulatory subunit (392 aa).

This sequence belongs to the class-II aminoacyl-tRNA synthetase family. HisZ subfamily. As to quaternary structure, heteromultimer composed of HisG and HisZ subunits.

The protein localises to the cytoplasm. The protein operates within amino-acid biosynthesis; L-histidine biosynthesis; L-histidine from 5-phospho-alpha-D-ribose 1-diphosphate: step 1/9. Required for the first step of histidine biosynthesis. May allow the feedback regulation of ATP phosphoribosyltransferase activity by histidine. The protein is ATP phosphoribosyltransferase regulatory subunit of Synechococcus sp. (strain WH7803).